Consider the following 491-residue polypeptide: Transmembrane protein 39B (491 aa).

Residues Met1–Leu56 form a disordered region. Asn9, Asn20, Asn29, and Asn45 each carry an N-linked (GlcNAc...) asparagine glycan. 2 stretches are compositionally biased toward polar residues: residues Asn9 to Val36 and Arg44 to Leu56. 8 consecutive transmembrane segments (helical) span residues Leu79–Ile99, Thr115–Ala135, Leu152–Gly172, Thr185–Phe205, Glu290–Val310, Cys322–Pro342, Ile423–Met443, and His449–Leu469.

Belongs to the TMEM39 family. As to expression, expressed in the ovary, followed by the intestine and brain.

Its subcellular location is the endoplasmic reticulum membrane. Functionally, may protect the cells against DNA damage caused by exposure to the cold-warming stress and facilitates tissue damage repair during the recovery phase. This chain is Transmembrane protein 39B, found in Danio rerio (Zebrafish).